A 184-amino-acid polypeptide reads, in one-letter code: Large ribosomal subunit protein uL6 (184 aa).

This sequence belongs to the universal ribosomal protein uL6 family. Part of the 50S ribosomal subunit.

This protein binds to the 23S rRNA, and is important in its secondary structure. It is located near the subunit interface in the base of the L7/L12 stalk, and near the tRNA binding site of the peptidyltransferase center. The sequence is that of Large ribosomal subunit protein uL6 from Methanosphaera stadtmanae (strain ATCC 43021 / DSM 3091 / JCM 11832 / MCB-3).